The sequence spans 58 residues: Preprotein translocase subunit SecG (58 aa).

Residues 1–32 (MARKRRKGGEGLVTAIGLVRFYEEVEEKIKVP) are Cytoplasmic-facing. Residues 33–54 (PEAVIGAAFALSIMTIALDLLL) traverse the membrane as a helical segment. Residues 55-58 (KAAR) are Extracellular-facing.

It belongs to the SEC61-beta family. In terms of assembly, component of the protein translocase complex. Heterotrimer consisting of alpha (SecY), beta (SecG) and gamma (SecE) subunits. Can form oligomers of the heterotrimer.

The protein localises to the cell membrane. Involved in protein export. The function of the beta subunit is unknown, but it may be involved in stabilization of the trimeric complex. The sequence is that of Preprotein translocase subunit SecG from Ignicoccus hospitalis (strain KIN4/I / DSM 18386 / JCM 14125).